A 213-amino-acid polypeptide reads, in one-letter code: Type II restriction enzyme BamHI (213 aa).

4 residues coordinate Mg(2+): glutamate 77, aspartate 94, glutamate 111, and phenylalanine 112. The Proton acceptor role is filled by glutamate 113.

In terms of assembly, homodimer. Mg(2+) serves as cofactor.

The enzyme catalyses Endonucleolytic cleavage of DNA to give specific double-stranded fragments with terminal 5'-phosphates.. In terms of biological role, a P subtype restriction enzyme that recognizes the double-stranded sequence 5'-GGATCC-3' and cleaves after G-1. This Bacillus amyloliquefaciens (Bacillus velezensis) protein is Type II restriction enzyme BamHI.